The primary structure comprises 444 residues: tRNA-2-methylthio-N(6)-dimethylallyladenosine synthase (444 aa).

Positions 2–119 constitute an MTTase N-terminal domain; that stretch reads KKLYIRTFGC…LPSMLNEVLT (118 aa). Cysteine 11, cysteine 48, cysteine 82, cysteine 161, cysteine 165, and cysteine 168 together coordinate [4Fe-4S] cluster. Positions 147-379 constitute a Radical SAM core domain; it reads KTSSVTAFVS…QKTIDKNTER (233 aa). One can recognise a TRAM domain in the interval 382 to 444; the sequence is KSMVGSVQKI…GNSLVGNLIA (63 aa).

Belongs to the methylthiotransferase family. MiaB subfamily. Monomer. [4Fe-4S] cluster serves as cofactor.

The protein resides in the cytoplasm. It catalyses the reaction N(6)-dimethylallyladenosine(37) in tRNA + (sulfur carrier)-SH + AH2 + 2 S-adenosyl-L-methionine = 2-methylsulfanyl-N(6)-dimethylallyladenosine(37) in tRNA + (sulfur carrier)-H + 5'-deoxyadenosine + L-methionine + A + S-adenosyl-L-homocysteine + 2 H(+). Catalyzes the methylthiolation of N6-(dimethylallyl)adenosine (i(6)A), leading to the formation of 2-methylthio-N6-(dimethylallyl)adenosine (ms(2)i(6)A) at position 37 in tRNAs that read codons beginning with uridine. This is tRNA-2-methylthio-N(6)-dimethylallyladenosine synthase from Ruthia magnifica subsp. Calyptogena magnifica.